The sequence spans 423 residues: Adenylosuccinate synthetase (423 aa).

Residues 12 to 18 (GDEGKGK) and 40 to 42 (GHT) each bind GTP. Asp-13 serves as the catalytic Proton acceptor. Mg(2+) is bound by residues Asp-13 and Gly-40. IMP-binding positions include 13 to 16 (DEGK), 38 to 41 (NAGH), Thr-129, Arg-143, Gln-224, Thr-239, and Arg-303. His-41 (proton donor) is an active-site residue. Substrate is bound at residue 299-305 (ATTGRKR). GTP contacts are provided by residues Arg-305, 331-333 (KGD), and 412-414 (SVG).

This sequence belongs to the adenylosuccinate synthetase family. Homodimer. Mg(2+) is required as a cofactor.

It is found in the cytoplasm. It carries out the reaction IMP + L-aspartate + GTP = N(6)-(1,2-dicarboxyethyl)-AMP + GDP + phosphate + 2 H(+). It participates in purine metabolism; AMP biosynthesis via de novo pathway; AMP from IMP: step 1/2. Its function is as follows. Plays an important role in the de novo pathway of purine nucleotide biosynthesis. Catalyzes the first committed step in the biosynthesis of AMP from IMP. This is Adenylosuccinate synthetase from Christiangramia forsetii (strain DSM 17595 / CGMCC 1.15422 / KT0803) (Gramella forsetii).